Here is a 989-residue protein sequence, read N- to C-terminus: E3 ubiquitin-protein ligase Arkadia (989 aa).

Residues Lys19, Lys33, Lys46, Lys58, Lys72, Lys86, Lys95, and Lys109 each participate in a glycyl lysine isopeptide (Lys-Gly) (interchain with G-Cter in SUMO2) cross-link. The segment at 63 to 195 is disordered; the sequence is FSHLCDDSQK…TEADPVPSLL (133 aa). Basic and acidic residues predominate over residues 65 to 88; that stretch reads HLCDDSQKQEKDMTGNQQEQEKSG. Residues 97 to 109 are compositionally biased toward polar residues; that stretch reads QQAGPSYVQNCVK. The segment covering 110–120 has biased composition (basic and acidic residues); it reads ENQEILGRRQQ. The segment covering 131–144 has biased composition (low complexity); that stretch reads SSLSECLSSPSSSL. Lys172 participates in a covalent cross-link: Glycyl lysine isopeptide (Lys-Gly) (interchain with G-Cter in SUMO2). Over residues 173-183 the composition is skewed to basic residues; it reads SRSHSARSHKW. Glycyl lysine isopeptide (Lys-Gly) (interchain with G-Cter in SUMO2) cross-links involve residues Lys197 and Lys217. Residues 213–293 form a disordered region; it reads KRLVKSSSSQ…PSNPAAPSGS (81 aa). Positions 240–402 are interaction with AXIN1; sequence ALAQRKYALL…VPTTSARMDS (163 aa). Composition is skewed to low complexity over residues 248-270 and 278-291; these read LLSSSSSSSENDLSSDSSSSSST and ASASENPSNPAAPS. Residues 298–302 carry the SUMO interaction motif 1 (SIM) motif; sequence VVVIE. Positions 323–329 match the SUMO interaction motif 2 (SIM) motif; the sequence is EVEIVTV. The interval 335–367 is disordered; it reads SRSTLGHSRSHWSQGSSSHTGRPQESRNRSRIS. The span at 345-355 shows a compositional bias: low complexity; sequence HWSQGSSSHTG. The SUMO interaction motif 3 (SIM) motif lies at 380–384; sequence VVDLT. Disordered stretches follow at residues 388–475, 506–559, and 641–675; these read DEPT…MPRL, HGHH…YHDQ, and MPPPYASLTRPLHHQASACHHSHGNAPPQTQPPPQ. Positions 393–451 are enriched in polar residues; that stretch reads VPTTSARMDSQTTSASINNSNPSTSEQASDTTSTVASSQPSTVSETEATLTSNSATGSS. The span at 506–520 shows a compositional bias: basic residues; that stretch reads HGHHFQHHHHHHHTP. Polar residues predominate over residues 548–558; sequence ANSSSGSSYHD. The ubiquitin binding stretch occupies residues 902-904; the sequence is YPH. Residues Lys918 and Lys922 each participate in a glycyl lysine isopeptide (Lys-Gly) (interchain with G-Cter in SUMO2) cross-link. 2 residues coordinate Zn(2+): Cys937 and Cys940. The segment at 937–978 adopts an RING-type; atypical zinc-finger fold; sequence CTICLSILEEGEDVRRLPCMHLFHQVCVDQWLITNKKCPICR. The ubiquitin binding stretch occupies residues 952 to 956; sequence RLPCM. Positions 960 and 963 each coordinate Zn(2+).

The protein belongs to the Arkadia family. As to quaternary structure, monomer. Interacts with SMAD6, SMAD7, AXIN1, AXIN2 and SKIL isoform SNON. Interacts with (phosphorylated) SMAD2 and SMAD3. Part of a complex containing RNF111, AXIN1 and SMAD7. Interacts (via SIM domains) with SUMO1 and SUMO2. In terms of tissue distribution, ubiquitously expressed.

The protein resides in the nucleus. It is found in the cytoplasm. The protein localises to the PML body. It carries out the reaction S-ubiquitinyl-[E2 ubiquitin-conjugating enzyme]-L-cysteine + [acceptor protein]-L-lysine = [E2 ubiquitin-conjugating enzyme]-L-cysteine + N(6)-ubiquitinyl-[acceptor protein]-L-lysine.. Its pathway is protein modification; protein ubiquitination. Binds free ubiquitin non-covalently via its RING-type zinc finger. Ubiquitin-binding leads to enhance the E3 ubiquitin-protein ligase activity by stabilizing the ubiquitin-conjugating enzyme E2 (donor ubiquitin) in the 'closed' conformation and activating ubiquitin transfer. Functionally, E3 ubiquitin-protein ligase required for mesoderm patterning during embryonic development. Acts as an enhancer of the transcriptional responses of the SMAD2/SMAD3 effectors, which are activated downstream of BMP. Acts by mediating ubiquitination and degradation of SMAD inhibitors such as SMAD7, inducing their proteasomal degradation and thereby enhancing the transcriptional activity of TGF-beta and BMP. In addition to enhance transcription of SMAD2/SMAD3 effectors, also regulates their turnover by mediating their ubiquitination and subsequent degradation, coupling their activation with degradation, thereby ensuring that only effectors 'in use' are degraded. Activates SMAD3/SMAD4-dependent transcription by triggering signal-induced degradation of SNON isoform of SKIL. Associates with UBE2D2 as an E2 enzyme. Specifically binds polysumoylated chains via SUMO interaction motifs (SIMs) and mediates ubiquitination of sumoylated substrates. Catalyzes 'Lys-63'-linked ubiquitination of sumoylated XPC in response to UV irradiation, promoting nucleotide excision repair. Mediates ubiquitination and degradation of sumoylated PML. The regulation of the BMP-SMAD signaling is however independent of sumoylation and is not dependent of SUMO interaction motifs (SIMs). The protein is E3 ubiquitin-protein ligase Arkadia of Mus musculus (Mouse).